We begin with the raw amino-acid sequence, 918 residues long: Aconitase-ribosomal protein bL21m fusion protein (918 aa).

The N-terminal 30 residues, 1–30 (MATFARMKLCLSGSSQAIPSKGISLVAARF), are a transit peptide targeting the mitochondrion. The interval 31-811 (QSTASRASYV…IDSIKQQPDH (781 aa)) is homocitrate dehydratase, mitochondrial. Residues Gln105 and 198-200 (DSH) contribute to the substrate site. [4Fe-4S] cluster is bound by residues Cys394, Cys457, and Cys460. Substrate is bound by residues Arg484, Arg489, Lys619, and 680–681 (AR). The tract at residues 812-918 (YADAYIFNRH…ILRVTELKLN (107 aa)) is large ribosomal subunit protein bL21m.

This sequence in the N-terminal section; belongs to the aconitase/IPM isomerase family. It in the C-terminal section; belongs to the bacterial ribosomal protein bL21 family. As to quaternary structure, component of the mitochondrial large ribosomal subunit (mt-LSU). Mature yeast 74S mitochondrial ribosomes consist of a small (37S) and a large (54S) subunit. The 37S small subunit contains a 15S ribosomal RNA (15S mt-rRNA) and at least 32 different proteins. The 54S large subunit contains a 21S rRNA (21S mt-rRNA) and at least 45 different proteins. [4Fe-4S] cluster is required as a cofactor.

The protein resides in the mitochondrion. It is found in the nucleus. The catalysed reaction is (2R)-homocitrate = cis-homoaconitate + H2O. The protein operates within amino-acid biosynthesis; L-lysine biosynthesis via AAA pathway; L-alpha-aminoadipate from 2-oxoglutarate: step 2/5. In terms of biological role, catalyzes the reversible dehydration of (R)-homocitrate to cis-homoaconitate, a step in the alpha-aminoadipate pathway for lysine biosynthesis. Component of the mitochondrial ribosome (mitoribosome), a dedicated translation machinery responsible for the synthesis of mitochondrial genome-encoded proteins, including at least some of the essential transmembrane subunits of the mitochondrial respiratory chain. The mitoribosomes are attached to the mitochondrial inner membrane and translation products are cotranslationally integrated into the membrane. This chain is Aconitase-ribosomal protein bL21m fusion protein (aco2), found in Schizosaccharomyces pombe (strain 972 / ATCC 24843) (Fission yeast).